A 1067-amino-acid polypeptide reads, in one-letter code: MEEVPQKIDFAGEESKILKYWDDIKAFETSVKMSEGKPEYSFYDGPPFATGLPHYGHILAGTIKDTITRYAHQTGHHVERRFGWDCHGLPIEFEIDKLHGVRTKEDVLKMGIPTYNQHCRSIVMKYSHEWEIVVNRMGRWIDMKNNYKTMDTPFMESVWWVFQELFKKDLVYQGFKVMPYSIGCTTPLSNFEASSNYKDVSDPACVVSFQTLDDEKVSILAWTTTPWTLPSNLALTVNPKMEYIKINDIKRNQIFILGKNRTSILYKSDKEYTVLETMKGTDLIGKKYVPMFPYFASDANMGGFVVIGGDFVTDDSGTGIVHTAPAYGEDDFNVCIANGVISRDQFKRPILNSVDANGCFTSDVTDFAGMMVKDAETTKQISIYLKNKGRMVNSANLVHSYPYCWRSDTPLIYKAVGSWFVRVESIRDKLLANNDKTYWVPDFVKEKRFANWLKNATDWAVSRNRYWGTPIPLWISEDGEEVVVIGSIDELERLSGVRVTDLHRESIDHITIPSQKGKGTLRRIEDVFDCWFESGSMPYAQQHYPFENKDKFEKIFPAHFIAEGLDQTRGWFYTLLVLSTALFDKPPFQNLIVNGLVLAADGKKMSKRLKNYPDPMEVVSKVGADSLRLYLINSPVVRAETLKFQEKGVQDMIKDVFLPWFNAYRFFVQNCLRFEKATNTTFQPDIKVALASENVMDKWILASCQSLIAFVRAEMAAYRLYTVVPKLVRFIEDLTNWFVRLNRKRLKGSNGDADCLAALNILYEVLMTICIAMGPFTPFFTEYMYQNLKKALPKEKQMDSVHYVMFPEPIQEAFNTRIEEAISRMQVVIELGRAARDRRTKPIKFPLKEFMVITENQQYLADLESLKSYILEELNIQNIVLTSDEGSFVVVTAEADNKRLGARLKNDFKKISPLISKLTNEQLREFQKTQTIDILGHELTSEDLKIIRKYNGETTNSEPSGNEEILTVLDLTVDSALYEKGLARELINRVQRLRKKSGLTFDDPVSMFYHTKEAELKTAIENNNDYIKETILFNLQFSETTSPSNSFATEIVSIVKDNDAEIYFLKN.

The short motif at 47 to 57 is the 'HIGH' region element; that stretch reads PFATGLPHYGH. Positions 604–608 match the 'KMSKS' region motif; the sequence is KMSKR. Residue lysine 607 coordinates ATP.

Belongs to the class-I aminoacyl-tRNA synthetase family.

The protein localises to the cytoplasm. The enzyme catalyses tRNA(Ile) + L-isoleucine + ATP = L-isoleucyl-tRNA(Ile) + AMP + diphosphate. This is Probable isoleucine--tRNA ligase, cytoplasmic (ileS) from Dictyostelium discoideum (Social amoeba).